A 304-amino-acid chain; its full sequence is Sulfotransferase 1C3 (304 aa).

56 to 61 contacts 3'-phosphoadenylyl sulfate; the sequence is KSGTTW. 115–117 is a substrate binding site; that stretch reads KTH. Residue His-117 is the Proton acceptor of the active site. Residues Arg-139, Ser-147, Tyr-202, 236–241, and 264–268 contribute to the 3'-phosphoadenylyl sulfate site; these read TSFDVM and FMRKG.

This sequence belongs to the sulfotransferase 1 family. As to expression, not detectable in any of the tissues tested. In terms of tissue distribution, expressed in the small intestine.

It localises to the cytoplasm. The catalysed reaction is an alcohol + 3'-phosphoadenylyl sulfate = an alkyl sulfate + adenosine 3',5'-bisphosphate + H(+). It catalyses the reaction a phenol + 3'-phosphoadenylyl sulfate = an aryl sulfate + adenosine 3',5'-bisphosphate + H(+). It carries out the reaction lithocholate + 3'-phosphoadenylyl sulfate = lithocholate sulfate + adenosine 3',5'-bisphosphate + H(+). Sulfotransferase that utilizes 3'-phospho-5'-adenylyl sulfate (PAPS) as sulfonate donor. Has sulfotransferase activity towards various substrates, such as bile acids, thyroid hormones and toward xenobiotic compounds such as chloro phenols and hydroxypyrenes. Lithocholic acid appears to be the best substrate among the endogenous compounds tested and 3,3',5,5'-tetrachloro-4,4'-biphenyldiol shows the highest specific activity among the xenobiotic compounds. In terms of biological role, exhibits weak sulphating activity and only toward chloro phenols (pentachlorophenol and 3,3',5,5'-tetrachloro-4,4'-biphenyldiol). This Homo sapiens (Human) protein is Sulfotransferase 1C3 (SULT1C3).